A 976-amino-acid chain; its full sequence is Vacuolar membrane protease (976 aa).

At 1 to 15 (MKLKSVFRSVLKYRK) the chain is on the cytoplasmic side. The chain crosses the membrane as a helical span at residues 16–36 (TNLSLLLLITYSIITLLYIFD). The Vacuolar segment spans residues 37–359 (HERYKLNLPK…KFFVISAKTL (323 aa)). Asn-96 and Asn-121 each carry an N-linked (GlcNAc...) asparagine glycan. Positions 156 and 168 each coordinate Zn(2+). N-linked (GlcNAc...) asparagine glycosylation is present at Asn-189. The active-site Proton acceptor is Glu-200. Glu-201 lines the Zn(2+) pocket. The N-linked (GlcNAc...) asparagine glycan is linked to Asn-217. Zn(2+)-binding residues include Glu-226 and His-300. A helical transmembrane segment spans residues 360–380 (FYWNCIFLLVSPVVAIGLYLI). Residues 381–392 (SRDRMTWKSYSW) are Cytoplasmic-facing. A helical transmembrane segment spans residues 393 to 412 (LSWTRFPLSLAAGIIVQKLF). The Vacuolar segment spans residues 413–428 (SNDIIRSNPLTFSRNY). Residues 429–449 (FWPISAFFTQVIFTSYVLINC) traverse the membrane as a helical segment. Residues 450 to 461 (SNFFFPCADMKS) are Cytoplasmic-facing. Residues 462–482 (LSIIELFIILWTILLFTSKLL) traverse the membrane as a helical segment. Over 483–496 (YSSDYRYTGLYPLS) the chain is Vacuolar. Residues 497–517 (IFFLLSTIAAILRLLALALGM) form a helical membrane-spanning segment. At 518-627 (RTRKRLGREC…NSLKLEYTDY (110 aa)) the chain is on the cytoplasmic side. The tract at residues 528-610 (RDHHSNYSSH…PLLKGSNSME (83 aa)) is disordered. The span at 549–558 (NLEQPQDQLT) shows a compositional bias: polar residues. Positions 559 to 570 (SSQDDQASIQDD) are enriched in low complexity. Over residues 582 to 601 (NVDEDHGMDSSSQQHDERVP) the composition is skewed to basic and acidic residues. The chain crosses the membrane as a helical span at residues 628 to 648 (AWIIQFLLIVPIPSFILFNSV). The Vacuolar segment spans residues 649 to 668 (DVIMDALNHTVQEGSKATFD). The N-linked (GlcNAc...) asparagine glycan is linked to Asn-656. The chain crosses the membrane as a helical span at residues 669 to 689 (VLRFGMVGSILIALPILPFFY). The Cytoplasmic segment spans residues 690–692 (KVN). A helical membrane pass occupies residues 693–713 (YITISLTALLFLISASKTLLV). Residues 714–976 (HPFTNSNPLK…LVIVKDAIIL (263 aa)) lie on the Vacuolar side of the membrane. 5 N-linked (GlcNAc...) asparagine glycosylation sites follow: Asn-768, Asn-796, Asn-811, Asn-866, and Asn-937.

It belongs to the peptidase M28 family. Zn(2+) serves as cofactor. N-glycosylated.

The protein resides in the vacuole membrane. Its function is as follows. May be involved in vacuolar sorting and osmoregulation. In Saccharomyces cerevisiae (strain ATCC 204508 / S288c) (Baker's yeast), this protein is Vacuolar membrane protease.